Consider the following 89-residue polypeptide: MAKGQSLQDPFLNALRRERVPVSIYLVNGIKLQGQVESFDQFVILLKNTVSQMVYKHAISTVVPARALHITPTQSSQPGYVQHDDAPAE.

The 60-residue stretch at 9–68 folds into the Sm domain; it reads DPFLNALRRERVPVSIYLVNGIKLQGQVESFDQFVILLKNTVSQMVYKHAISTVVPARAL.

It belongs to the Hfq family. In terms of assembly, homohexamer.

Its function is as follows. RNA chaperone that binds small regulatory RNA (sRNAs) and mRNAs to facilitate mRNA translational regulation in response to envelope stress, environmental stress and changes in metabolite concentrations. Also binds with high specificity to tRNAs. This Shewanella denitrificans (strain OS217 / ATCC BAA-1090 / DSM 15013) protein is RNA-binding protein Hfq.